We begin with the raw amino-acid sequence, 408 residues long: CinA-like protein (408 aa).

It belongs to the CinA family.

In Anaeromyxobacter dehalogenans (strain 2CP-C), this protein is CinA-like protein.